Reading from the N-terminus, the 165-residue chain is 2-C-methyl-D-erythritol 2,4-cyclodiphosphate synthase (165 aa).

Aspartate 8 and histidine 10 together coordinate a divalent metal cation. 4-CDP-2-C-methyl-D-erythritol 2-phosphate is bound by residues 8-10 and 34-35; these read DVH and HS. Histidine 42 lines the a divalent metal cation pocket. 4-CDP-2-C-methyl-D-erythritol 2-phosphate contacts are provided by residues 56-58, 61-65, 100-106, 132-135, phenylalanine 139, and arginine 142; these read DIG, FPDTD, AQAPKMA, and TTTE.

This sequence belongs to the IspF family. In terms of assembly, homotrimer. A divalent metal cation is required as a cofactor.

The enzyme catalyses 4-CDP-2-C-methyl-D-erythritol 2-phosphate = 2-C-methyl-D-erythritol 2,4-cyclic diphosphate + CMP. It functions in the pathway isoprenoid biosynthesis; isopentenyl diphosphate biosynthesis via DXP pathway; isopentenyl diphosphate from 1-deoxy-D-xylulose 5-phosphate: step 4/6. In terms of biological role, involved in the biosynthesis of isopentenyl diphosphate (IPP) and dimethylallyl diphosphate (DMAPP), two major building blocks of isoprenoid compounds. Catalyzes the conversion of 4-diphosphocytidyl-2-C-methyl-D-erythritol 2-phosphate (CDP-ME2P) to 2-C-methyl-D-erythritol 2,4-cyclodiphosphate (ME-CPP) with a corresponding release of cytidine 5-monophosphate (CMP). In Pectobacterium atrosepticum (strain SCRI 1043 / ATCC BAA-672) (Erwinia carotovora subsp. atroseptica), this protein is 2-C-methyl-D-erythritol 2,4-cyclodiphosphate synthase.